We begin with the raw amino-acid sequence, 188 residues long: Pro-adrenomedullin (188 aa).

An N-terminal signal peptide occupies residues 1–21; sequence MKLVPVALMYLGSLAFLGADT. The residue at position 41 (Arg-41) is an Arginine amide. The propeptide occupies 45-92; sequence ELRLSSSYPTGIADLKAGPAQTVIRPQDVKGSSRSPQASIPDAARIRV. An intrachain disulfide couples Cys-110 to Cys-115. The disordered stretch occupies residues 131-177; that stretch reads DKDGVAPRSKISPQGYGRRRRRSLPEASLGRTLRSQEPQAHGAPASP. A Tyrosine amide modification is found at Tyr-146. The propeptide at 153-188 is preproAM C-terminal fragment; sequence SLPEASLGRTLRSQEPQAHGAPASPAHQVLATLFRI.

Belongs to the adrenomedullin family. As to expression, highly expressed in adrenal glands, lung and kidney.

The protein localises to the secreted. Its function is as follows. Adrenomedullin/ADM and proadrenomedullin N-20 terminal peptide/PAMP are peptide hormones that act as potent hypotensive and vasodilatator agents. Numerous actions have been reported most related to the physiologic control of fluid and electrolyte homeostasis. In terms of biological role, ADM function is mediated by the CALCRL-RAMP2 and CALCRL-RAMP3 receptor complexes with ADM showing the highest potency for the CALCRL-RAMP2 complex. The polypeptide is Pro-adrenomedullin (ADM) (Sus scrofa (Pig)).